A 547-amino-acid polypeptide reads, in one-letter code: Chaperonin GroEL (547 aa).

Residues 29-32 (TLGP), lysine 50, 86-90 (DGTTT), glycine 414, 478-480 (NAA), and aspartate 494 contribute to the ATP site.

This sequence belongs to the chaperonin (HSP60) family. As to quaternary structure, forms a cylinder of 14 subunits composed of two heptameric rings stacked back-to-back. Interacts with the co-chaperonin GroES.

Its subcellular location is the cytoplasm. The catalysed reaction is ATP + H2O + a folded polypeptide = ADP + phosphate + an unfolded polypeptide.. In terms of biological role, together with its co-chaperonin GroES, plays an essential role in assisting protein folding. The GroEL-GroES system forms a nano-cage that allows encapsulation of the non-native substrate proteins and provides a physical environment optimized to promote and accelerate protein folding. In Saccharophagus degradans (strain 2-40 / ATCC 43961 / DSM 17024), this protein is Chaperonin GroEL.